We begin with the raw amino-acid sequence, 284 residues long: 2-dehydro-3-deoxyphosphooctonate aldolase (284 aa).

Belongs to the KdsA family.

The protein localises to the cytoplasm. The catalysed reaction is D-arabinose 5-phosphate + phosphoenolpyruvate + H2O = 3-deoxy-alpha-D-manno-2-octulosonate-8-phosphate + phosphate. Its pathway is carbohydrate biosynthesis; 3-deoxy-D-manno-octulosonate biosynthesis; 3-deoxy-D-manno-octulosonate from D-ribulose 5-phosphate: step 2/3. The protein operates within bacterial outer membrane biogenesis; lipopolysaccharide biosynthesis. The protein is 2-dehydro-3-deoxyphosphooctonate aldolase of Erwinia tasmaniensis (strain DSM 17950 / CFBP 7177 / CIP 109463 / NCPPB 4357 / Et1/99).